A 147-amino-acid chain; its full sequence is Large ribosomal subunit protein uL13 (147 aa).

This sequence belongs to the universal ribosomal protein uL13 family. Part of the 50S ribosomal subunit.

Functionally, this protein is one of the early assembly proteins of the 50S ribosomal subunit, although it is not seen to bind rRNA by itself. It is important during the early stages of 50S assembly. The chain is Large ribosomal subunit protein uL13 from Lactiplantibacillus plantarum (strain ATCC BAA-793 / NCIMB 8826 / WCFS1) (Lactobacillus plantarum).